Reading from the N-terminus, the 248-residue chain is Ankyrin repeat domain-containing protein 45 (248 aa).

Acidic residues-rich tracts occupy residues 1-10 (MEPEETLESE) and 22-33 (EYEESQEAEETG). Residues 1–42 (MEPEETLESESSEKSLFSSQQEYEESQEAEETGAENPLLQPT) form a disordered region. ANK repeat units follow at residues 75 to 104 (VGRNLLYAACMAGKSDVIKALAKYGVNLNE) and 108 to 137 (RGYTLLHCAAAWGRLETLKALVELDVDIEA).

The protein resides in the cytoplasm. It is found in the midbody. Its subcellular location is the midbody ring. The protein localises to the cleavage furrow. Its function is as follows. May play a role during cell division. The sequence is that of Ankyrin repeat domain-containing protein 45 (Ankrd45) from Mus musculus (Mouse).